Consider the following 375-residue polypeptide: Queuine tRNA-ribosyltransferase (375 aa).

Aspartate 89 (proton acceptor) is an active-site residue. Residues 89-93 (DSGGF), aspartate 143, glutamine 187, and glycine 214 each bind substrate. The RNA binding stretch occupies residues 245–251 (GVGKPED). Catalysis depends on aspartate 264, which acts as the Nucleophile. Residues 269-273 (TRNAR) are RNA binding; important for wobble base 34 recognition. 4 residues coordinate Zn(2+): cysteine 302, cysteine 304, cysteine 307, and histidine 333.

It belongs to the queuine tRNA-ribosyltransferase family. Homodimer. Within each dimer, one monomer is responsible for RNA recognition and catalysis, while the other monomer binds to the replacement base PreQ1. Requires Zn(2+) as cofactor.

It catalyses the reaction 7-aminomethyl-7-carbaguanine + guanosine(34) in tRNA = 7-aminomethyl-7-carbaguanosine(34) in tRNA + guanine. It participates in tRNA modification; tRNA-queuosine biosynthesis. In terms of biological role, catalyzes the base-exchange of a guanine (G) residue with the queuine precursor 7-aminomethyl-7-deazaguanine (PreQ1) at position 34 (anticodon wobble position) in tRNAs with GU(N) anticodons (tRNA-Asp, -Asn, -His and -Tyr). Catalysis occurs through a double-displacement mechanism. The nucleophile active site attacks the C1' of nucleotide 34 to detach the guanine base from the RNA, forming a covalent enzyme-RNA intermediate. The proton acceptor active site deprotonates the incoming PreQ1, allowing a nucleophilic attack on the C1' of the ribose to form the product. After dissociation, two additional enzymatic reactions on the tRNA convert PreQ1 to queuine (Q), resulting in the hypermodified nucleoside queuosine (7-(((4,5-cis-dihydroxy-2-cyclopenten-1-yl)amino)methyl)-7-deazaguanosine). The protein is Queuine tRNA-ribosyltransferase of Citrobacter koseri (strain ATCC BAA-895 / CDC 4225-83 / SGSC4696).